We begin with the raw amino-acid sequence, 339 residues long: tRNA N6-adenosine threonylcarbamoyltransferase (339 aa).

Residues His111 and His115 each contribute to the Fe cation site. Substrate contacts are provided by residues 134-138 (LVSGG), Asp167, Gly180, and Asn274. Residue Asp302 coordinates Fe cation.

The protein belongs to the KAE1 / TsaD family. Fe(2+) serves as cofactor.

Its subcellular location is the cytoplasm. It carries out the reaction L-threonylcarbamoyladenylate + adenosine(37) in tRNA = N(6)-L-threonylcarbamoyladenosine(37) in tRNA + AMP + H(+). Required for the formation of a threonylcarbamoyl group on adenosine at position 37 (t(6)A37) in tRNAs that read codons beginning with adenine. Is involved in the transfer of the threonylcarbamoyl moiety of threonylcarbamoyl-AMP (TC-AMP) to the N6 group of A37, together with TsaE and TsaB. TsaD likely plays a direct catalytic role in this reaction. The sequence is that of tRNA N6-adenosine threonylcarbamoyltransferase from Methylobacillus flagellatus (strain ATCC 51484 / DSM 6875 / VKM B-1610 / KT).